The following is a 504-amino-acid chain: DnaJ homolog subfamily C member 3 (504 aa).

A signal peptide spans 1-31; sequence MVAPGSVTSRLGSVFPFLLVLVDLQYEGAEC. 9 TPR repeats span residues 37-70, 72-104, 105-138, 154-187, 189-221, 222-255, 268-301, 306-339, and 340-373; these read VEKH…DPDN, IAYY…KMDF, TAAR…NPSE, MQRL…CVWD, ELRE…KNDN, TEAF…DQDH, LNKL…EPSI, VRSK…EPDN, and VNAL…NEND. A disulfide bridge links cysteine 248 with cysteine 258. The residue at position 274 (serine 274) is a Phosphoserine; by FAM20C. A disulfide bridge links cysteine 313 with cysteine 329. A flexible linker region spans residues 375 to 393; the sequence is QIREGLEKAQRLLKQSQKR. Positions 394-462 constitute a J domain; the sequence is DYYKILGVKR…EMRKKFDDGE (69 aa). A disordered region spans residues 451–481; that stretch reads DPEMRKKFDDGEDPLDAESQQGGGGNPFHRS.

In terms of assembly, interacts with EIF2AK4/GCN2; this interaction occurs under endoplasmic reticulum (ER) stress, hypothermic and amino acid starving stress conditions and inhibits EIF2AK4/GCN2 kinase activity. Interacts with EIF2AK3. Interacts with EIF2AK2. Forms a trimeric complex with DNAJB1 and HSPA8. Interacts with THAP12. As to expression, widely expressed with high level in the pancreas and testis. Also expressed in cell lines with different levels.

It is found in the endoplasmic reticulum. Its function is as follows. Involved in the unfolded protein response (UPR) during endoplasmic reticulum (ER) stress. Acts as a negative regulator of the EIF2AK4/GCN2 kinase activity by preventing the phosphorylation of eIF-2-alpha at 'Ser-52' and hence attenuating general protein synthesis under ER stress, hypothermic and amino acid starving stress conditions. Co-chaperone of HSPA8/HSC70, it stimulates its ATPase activity. May inhibit both the autophosphorylation of EIF2AK2/PKR and the ability of EIF2AK2 to catalyze phosphorylation of the EIF2A. May inhibit EIF2AK3/PERK activity. This is DnaJ homolog subfamily C member 3 (DNAJC3) from Homo sapiens (Human).